Reading from the N-terminus, the 190-residue chain is Recombination protein RecR (190 aa).

The segment at 58-73 (CEQCGALSENELCEIC) adopts a C4-type zinc-finger fold. A Toprim domain is found at 81–167 (NILCIVESPK…TFSKIAQGIP (87 aa)).

This sequence belongs to the RecR family.

In terms of biological role, may play a role in DNA repair. It seems to be involved in an RecBC-independent recombinational process of DNA repair. It may act with RecF and RecO. The protein is Recombination protein RecR of Campylobacter jejuni (strain RM1221).